The following is a 459-amino-acid chain: MKNYTPKEIVEELDKYIVGQKEAKKSVAVALRNRYRRNLLSDDFKEEVTPKNIIMVGPTGVGKTEIARRIAKLVEAPFVKVEATKFTEVGYVGRDVDSMVRDLVEAAVRMVKEEKLKKVTEKAKKIAEDRLIDYIVGKRKKQAKNPFEMLFNYPAAEKSEETEEESMQYKREEIRQKLRNGELDNYVVEIEVTDTSTPMMEMYTNLGSEEMNINLQDIFADILPKKKKIKKVPVYEAKRILESEEAQNLIDMDEVIEEAIKRAENDGIIFIDEIDKIASSGYTAGPDVSREGVQRDILPIIEGCTVMTKYGPVKTDHILFIAAGAFNIAKVSDLIPELQGRFPVRVSLKPLTKEDFIRILKEPKNALTKQYQELLRTEGIEVKYTDEAIEAIAEVAYLINQQSEDIGARRLHTVMEKLFEELSFNAPDLKGQQIVITEEYVKEQLKDSLNKYEVNKYIL.

Residues V18, 60–65, D272, E337, and R409 contribute to the ATP site; that span reads GVGKTE.

Belongs to the ClpX chaperone family. HslU subfamily. As to quaternary structure, a double ring-shaped homohexamer of HslV is capped on each side by a ring-shaped HslU homohexamer. The assembly of the HslU/HslV complex is dependent on binding of ATP.

It localises to the cytoplasm. In terms of biological role, ATPase subunit of a proteasome-like degradation complex; this subunit has chaperone activity. The binding of ATP and its subsequent hydrolysis by HslU are essential for unfolding of protein substrates subsequently hydrolyzed by HslV. HslU recognizes the N-terminal part of its protein substrates and unfolds these before they are guided to HslV for hydrolysis. The polypeptide is ATP-dependent protease ATPase subunit HslU (Thermoanaerobacter sp. (strain X514)).